The sequence spans 640 residues: tRNA-dihydrouridine(47) synthase [NAD(P)(+)]-like (640 aa).

Over residues 1 to 11 the composition is skewed to polar residues; it reads MAESEGSNTEN. Disordered stretches follow at residues 1–23 and 43–123; these read MAES…ENLD and FIDA…HSQF. Over residues 43-57 the composition is skewed to basic and acidic residues; that stretch reads FIDADGKDVTEKETC. Positions 58-72 are enriched in polar residues; the sequence is SELSLNDAENTTRTE. The span at 77–86 shows a compositional bias: basic and acidic residues; it reads PEAKRIKLDD. The span at 104 to 120 shows a compositional bias: basic residues; sequence EKKRARGQNKSRPHMKH. C3H1-type zinc fingers lie at residues 123–153 and 161–191; these read FEEN…HDVA and EDIR…HLGE. Residues 301–303 and Gln-355 contribute to the FMN site; that span reads PLT. Residue Cys-386 is the Proton donor of the active site. FMN-binding positions include Lys-425, His-455, 487–489, and 510–511; these read NGD and AR.

The protein belongs to the Dus family. Dus3 subfamily. The cofactor is FMN.

The catalysed reaction is 5,6-dihydrouridine(47) in tRNA + NAD(+) = uridine(47) in tRNA + NADH + H(+). The enzyme catalyses 5,6-dihydrouridine(47) in tRNA + NADP(+) = uridine(47) in tRNA + NADPH + H(+). It catalyses the reaction a 5,6-dihydrouridine in mRNA + NAD(+) = a uridine in mRNA + NADH + H(+). It carries out the reaction a 5,6-dihydrouridine in mRNA + NADP(+) = a uridine in mRNA + NADPH + H(+). In terms of biological role, catalyzes the synthesis of dihydrouridine, a modified base, in various RNAs, such as tRNAs, mRNAs and some long non-coding RNAs (lncRNAs). Mainly modifies the uridine in position 47 (U47) in the D-loop of most cytoplasmic tRNAs. Also able to mediate the formation of dihydrouridine in some mRNAs, thereby regulating their translation. This is tRNA-dihydrouridine(47) synthase [NAD(P)(+)]-like (dus3l) from Xenopus laevis (African clawed frog).